The chain runs to 245 residues: Probable transcriptional regulatory protein LVIS_1199 (245 aa).

The tract at residues 1–23 is disordered; that stretch reads MSGHSKWHNIQGRKNAQDAKRGK.

The protein belongs to the TACO1 family.

Its subcellular location is the cytoplasm. The chain is Probable transcriptional regulatory protein LVIS_1199 from Levilactobacillus brevis (strain ATCC 367 / BCRC 12310 / CIP 105137 / JCM 1170 / LMG 11437 / NCIMB 947 / NCTC 947) (Lactobacillus brevis).